The following is a 105-amino-acid chain: MCLTTSEPPFPDTDTPTMRSASYHIKHKSKTQTHLRILNLTRRRRLLKEQKEMEMRNLKLFVENQSIIRENEALKKKALLLHHENNALFALLHPKYSPVSTSLLQ.

Positions 1–20 (MCLTTSEPPFPDTDTPTMRS) are disordered. The stretch at 39–60 (NLTRRRRLLKEQKEMEMRNLKL) forms a coiled coil.

Interacts with REV.

Functionally, competitive inhibitor of the HD-ZIPIII transcription factors in shoot apical meristem (SAM) development. Acts by forming non-functional heterodimers. Part of a negative feedback loop. Essential for proper functioning of stem cells in the SAM. This is Protein LITTLE ZIPPER 2 from Arabidopsis thaliana (Mouse-ear cress).